A 737-amino-acid chain; its full sequence is Angiotensin-converting enzyme-like protein Ace3 (737 aa).

The N-terminal stretch at 1-23 (MNLPWALLLVLLSHRQLLPWLRT) is a signal peptide. At 24 to 639 (VGETSLNDFY…TDTEPEQAYL (616 aa)) the chain is on the extracellular side. In terms of domain architecture, Peptidase M2 spans 32 to 611 (FYSEAQAKLF…VKQGDTLGWP (580 aa)). A disulfide bridge connects residues Cys-146 and Cys-152. Residues Arg-180 and Tyr-218 each coordinate chloride. A disulfide bridge connects residues Cys-346 and Cys-364. Zn(2+) contacts are provided by His-377 and His-381. An N-linked (GlcNAc...) asparagine glycan is attached at Asn-390. Residue Glu-405 participates in Zn(2+) binding. Chloride is bound by residues Trp-479, Arg-483, and Arg-516. Cys-532 and Cys-544 are oxidised to a cystine. Residues 640–660 (GQWVLLSMSFFMLVLILALGF) form a helical membrane-spanning segment. The Cytoplasmic segment spans residues 661 to 700 (RLHYLEKQLLDEDTMILKTLPYSYFLGIAMEPHQAARKQW). Residues 701–721 (LLLGLCCILMLCCIGLLIRIV) traverse the membrane as a helical segment. Residues 722 to 737 (TQNTENTPWMKNEGQS) lie on the Extracellular side of the membrane.

This sequence belongs to the peptidase M2 family. In terms of assembly, interacts with IZUMO1. It depends on Zn(2+) as a cofactor. As to expression, expressed in sperm and testis (at protein level). Expressed in heart and testis. Not detected in kidney, lung, liver, brain, ovary, spleen and thymus.

Its subcellular location is the cytoplasmic vesicle. The protein localises to the secretory vesicle. The protein resides in the acrosome membrane. The chain is Angiotensin-converting enzyme-like protein Ace3 from Mus musculus (Mouse).